The following is a 140-amino-acid chain: Nucleoside diphosphate kinase (140 aa).

ATP contacts are provided by K11, F59, R87, T93, R104, and N114. H117 functions as the Pros-phosphohistidine intermediate in the catalytic mechanism.

The protein belongs to the NDK family. Homotetramer. Mg(2+) serves as cofactor.

The protein resides in the cytoplasm. It catalyses the reaction a 2'-deoxyribonucleoside 5'-diphosphate + ATP = a 2'-deoxyribonucleoside 5'-triphosphate + ADP. The catalysed reaction is a ribonucleoside 5'-diphosphate + ATP = a ribonucleoside 5'-triphosphate + ADP. Functionally, major role in the synthesis of nucleoside triphosphates other than ATP. The ATP gamma phosphate is transferred to the NDP beta phosphate via a ping-pong mechanism, using a phosphorylated active-site intermediate. In Rhodopseudomonas palustris (strain BisB18), this protein is Nucleoside diphosphate kinase.